The following is a 309-amino-acid chain: G-protein coupled receptor 35 (309 aa).

Over 1 to 24 the chain is Extracellular; that stretch reads MNGTYNTCGSSDLTWPPAIKLGFY. A glycan (N-linked (GlcNAc...) asparagine) is linked at Asn-2. A helical membrane pass occupies residues 25-45; sequence AYLGVLLVLGLLLNSLALWVF. The Cytoplasmic segment spans residues 46–56; that stretch reads CCRMQQWTETR. A helical membrane pass occupies residues 57-77; the sequence is IYMTNLAVADLCLLCTLPFVL. Residues 78–90 lie on the Extracellular side of the membrane; it reads HSLRDTSDTPLCQ. A disulfide bond links Cys-89 and Cys-162. A helical membrane pass occupies residues 91–112; it reads LSQGIYLTNRYMSISLVTAIAV. Residues 113 to 135 lie on the Cytoplasmic side of the membrane; that stretch reads DRYVAVRHPLRARGLRSPRQAAA. The helical transmembrane segment at 136–156 threads the bilayer; that stretch reads VCAVLWVLVIGSLVARWLLGI. Topologically, residues 157-174 are extracellular; sequence QEGGFCFRSTRHNFNSMA. A helical transmembrane segment spans residues 175 to 195; the sequence is FPLLGFYLPLAVVVFCSLKVV. At 196–218 the chain is on the cytoplasmic side; the sequence is TALAQRPPTDVGQAEATRKAARM. The helical transmembrane segment at 219-239 threads the bilayer; the sequence is VWANLLVFVVCFLPLHVGLTV. Residues 240 to 258 lie on the Extracellular side of the membrane; the sequence is RLAVGWNACALLETIRRAL. A helical transmembrane segment spans residues 259-279; that stretch reads YITSKLSDANCCLDAICYYYM. Residues 280-309 are Cytoplasmic-facing; sequence AKEFQEASALAVAPSAKAHKSQDSLCVTLA. Residues Ser-287 and Ser-294 each carry the phosphoserine modification. Ser-300 and Ser-303 each carry phosphoserine; by GRK5 and GRK6. Thr-307 carries the post-translational modification Phosphothreonine.

This sequence belongs to the G-protein coupled receptor 1 family. In terms of assembly, interacts with GNA13. Interacts with ARRB2. Multiply phosphorylated in clusters of serines and threonines in the C-terminal tail. Phosphorylation of Ser-300 and Ser-303 is mediated by GRK5 and/or GRK6. Predominantly expressed in immune and gastrointestinal tissues.

It is found in the cell membrane. G-protein coupled receptor that binds to several ligands including the tryptophan metabolite kynurenic acid (KYNA), lysophosphatidic acid (LPA) or 5-hydroxyindoleacetic acid (5-HIAA) with high affinity, leading to rapid and transient activation of numerous intracellular signaling pathways. Plays a role in neutrophil recruitment to sites of inflammation and bacterial clearance through the major serotonin metabolite 5-HIAA that acts as a physiological ligand. Stimulates lipid metabolism, thermogenic, and anti-inflammatory gene expression in adipose tissue once activated by kynurenic acid. In macrophages, activation by lysophosphatidic acid promotes GPR35-induced signaling with a distinct transcriptional profile characterized by TNF production associated with ERK and NF-kappa-B activation. In turn, induces chemotaxis of macrophages. The polypeptide is G-protein coupled receptor 35 (GPR35) (Homo sapiens (Human)).